The primary structure comprises 957 residues: Vacuolar membrane protease (957 aa).

The Cytoplasmic portion of the chain corresponds to 1–10; sequence MARYNPFSFT. The helical transmembrane segment at 11–31 threads the bilayer; it reads PGPVVFFTTVIYVGLFAALLV. Residues 32 to 369 are Vacuolar-facing; it reads THLTVPDYPS…RVFVVFQLHT (338 aa). N-linked (GlcNAc...) asparagine glycosylation is found at Asn48, Asn105, and Asn136. Residues His152 and Asp164 each contribute to the Zn(2+) site. Glu198 acts as the Proton acceptor in catalysis. Residues Glu199, Glu224, and His297 each coordinate Zn(2+). The helical transmembrane segment at 370-390 threads the bilayer; that stretch reads LFALCVTLLVVAPITLIGLTF. The Cytoplasmic portion of the chain corresponds to 391 to 423; sequence GLSKADKNYLLARKAFVYSSDDDNPVQLYGWRG. The helical transmembrane segment at 424-444 threads the bilayer; that stretch reads FFRFPIIFISATAVVVALAYL. Residues 445–450 are Vacuolar-facing; it reads LVRFNA. Residues 451–471 form a helical membrane-spanning segment; it reads FIIYSSPFAVWSMMLSAWFFV. The Cytoplasmic segment spans residues 472 to 490; the sequence is AWFFSRGADAMRPSALQRM. Residues 491–511 form a helical membrane-spanning segment; sequence YALIWLFIGSFVLLTIVTVFV. Over 512–521 the chain is Vacuolar; it reads NNYQVVAGYP. The helical transmembrane segment at 522-542 threads the bilayer; sequence ALFYFAVVFVAIMLSYLELFF. Residues 543–642 lie on the Cytoplasmic side of the membrane; sequence APTKSAYARH…YPGEQEWSGK (100 aa). Disordered regions lie at residues 559–586 and 603–627; these read SRRN…PVAD and FTRY…SQRL. Over residues 603–613 the composition is skewed to basic and acidic residues; it reads FTRYGSRRDSA. Residues 643 to 663 traverse the membrane as a helical segment; the sequence is LPSWIWIIQLLLLAPLVIVLV. The Vacuolar segment spans residues 664-685; sequence GQVALLLTSALYQTPSDGNSPL. The helical transmembrane segment at 686–706 threads the bilayer; that stretch reads FIYLAIAALSVLLLAPTGPFI. At 707-713 the chain is on the cytoplasmic side; it reads HRFTYHV. A helical membrane pass occupies residues 714–734; the sequence is PTFLFLVCLGTVIYNLVAFPF. At 735 to 957 the chain is on the vacuolar side; sequence SRDHRLKVYF…LVEGFKRFEI (223 aa). N-linked (GlcNAc...) asparagine glycosylation is found at Asn782, Asn818, and Asn834.

The protein belongs to the peptidase M28 family. The cofactor is Zn(2+).

The protein localises to the vacuole membrane. Its function is as follows. May be involved in vacuolar sorting and osmoregulation. The chain is Vacuolar membrane protease from Pyrenophora teres f. teres (strain 0-1) (Barley net blotch fungus).